We begin with the raw amino-acid sequence, 278 residues long: Small ribosomal subunit protein uS2 (278 aa).

A disordered region spans residues 235–278; the sequence is AEAAEEAPKRERKAKAAVKKERTKKEDDDALNANVAGKFAKDEE. Basic and acidic residues predominate over residues 252 to 261; that stretch reads VKKERTKKED.

This sequence belongs to the universal ribosomal protein uS2 family.

This Parabacteroides distasonis (strain ATCC 8503 / DSM 20701 / CIP 104284 / JCM 5825 / NCTC 11152) protein is Small ribosomal subunit protein uS2.